A 255-amino-acid polypeptide reads, in one-letter code: Hydroxyacylglutathione hydrolase (255 aa).

Zn(2+)-binding residues include histidine 56, histidine 58, aspartate 60, histidine 61, histidine 114, aspartate 133, and histidine 171.

Belongs to the metallo-beta-lactamase superfamily. Glyoxalase II family. In terms of assembly, monomer. Zn(2+) is required as a cofactor.

The catalysed reaction is an S-(2-hydroxyacyl)glutathione + H2O = a 2-hydroxy carboxylate + glutathione + H(+). The protein operates within secondary metabolite metabolism; methylglyoxal degradation; (R)-lactate from methylglyoxal: step 2/2. Its function is as follows. Thiolesterase that catalyzes the hydrolysis of S-D-lactoyl-glutathione to form glutathione and D-lactic acid. This Rhodopseudomonas palustris (strain BisA53) protein is Hydroxyacylglutathione hydrolase.